A 222-amino-acid polypeptide reads, in one-letter code: Putative N-acetylmannosamine-6-phosphate 2-epimerase (222 aa).

This sequence belongs to the NanE family.

It carries out the reaction an N-acyl-D-glucosamine 6-phosphate = an N-acyl-D-mannosamine 6-phosphate. Its pathway is amino-sugar metabolism; N-acetylneuraminate degradation; D-fructose 6-phosphate from N-acetylneuraminate: step 3/5. Functionally, converts N-acetylmannosamine-6-phosphate (ManNAc-6-P) to N-acetylglucosamine-6-phosphate (GlcNAc-6-P). The protein is Putative N-acetylmannosamine-6-phosphate 2-epimerase of Staphylococcus aureus (strain bovine RF122 / ET3-1).